Reading from the N-terminus, the 103-residue chain is Vesicle-associated membrane protein 3 (103 aa).

The tract at residues 1 to 25 is disordered; sequence MSTGVPSGSSAATGSNRRLQQTQNQ. Residues 1-81 are Cytoplasmic-facing; sequence MSTGVPSGSS…KRKYWWKNCK (81 aa). Residues 18–78 enclose the v-SNARE coiled-coil homology domain; it reads RLQQTQNQVD…AKLKRKYWWK (61 aa). Residues K70, K72, and K81 each participate in a glycyl lysine isopeptide (Lys-Gly) (interchain with G-Cter in ubiquitin) cross-link. Residues 82 to 102 traverse the membrane as a helical; Anchor for type IV membrane protein segment; the sequence is MWAIGISVLVIIVIIIIVWCV. Position 103 (S103) is a topological domain, vesicular.

Belongs to the synaptobrevin family. Interacts with POPDC1 (via the C-terminus cytoplasmic tail). Interacts with BCAP31; involved in VAMP3 export from the endoplasmic reticulum. Interacts with BAIAP3; this interaction is increased in the presence of calcium. Interacts with PICALM. Post-translationally, ubiquitinated by RNF167 at Lys-70, Lys-72 and Lys-81, regulating the recycling endosome pathway. In terms of processing, (Microbial infection) Targeted and hydrolyzed by C.botulinum neurotoxin type D (BoNT/D, botD) which hydrolyzes the 46-Lys-|-Leu-47 bond and probably inhibits neurotransmitter release. (Microbial infection) Targeted and hydrolyzed by C.botulinum neurotoxin type F (BoNT/F, botF) which hydrolyzes the 45-Gln-|-Lys-46 bond and probably inhibits neurotransmitter release. Post-translationally, (Microbial infection) Targeted and hydrolyzed by C.tetani toxin (tetX) which hydrolyzes the 63-Gln-|-Phe-64 bond and probably inhibits neurotransmitter release. As to expression, ubiquitous.

It localises to the early endosome membrane. It is found in the recycling endosome membrane. The protein resides in the synapse. Its subcellular location is the synaptosome. Its function is as follows. SNARE involved in vesicular transport from the late endosomes to the trans-Golgi network. In Rattus norvegicus (Rat), this protein is Vesicle-associated membrane protein 3 (Vamp3).